The sequence spans 370 residues: ATP synthase gamma chain, chloroplastic (370 aa).

The transit peptide at 1-54 (MRSFCIAALLAVASAFTTQPTSFTVKTANVGERASGVFPEQSSAHRTRKATIVM) directs the protein to the chloroplast. Residue C145 is part of the active site.

The protein belongs to the ATPase gamma chain family. F-type ATPases have 2 components, CF(1) - the catalytic core - and CF(0) - the membrane proton channel. CF(1) has five subunits: alpha(3), beta(3), gamma(1), delta(1), epsilon(1). CF(0) has four main subunits: a, b, b' and c.

It is found in the plastid. Its subcellular location is the chloroplast thylakoid membrane. Produces ATP from ADP in the presence of a proton gradient across the membrane. The gamma chain is believed to be important in regulating ATPase activity and the flow of protons through the CF(0) complex. In Phaeodactylum tricornutum (Diatom), this protein is ATP synthase gamma chain, chloroplastic (ATPC).